We begin with the raw amino-acid sequence, 424 residues long: Histidine--tRNA ligase (424 aa).

Belongs to the class-II aminoacyl-tRNA synthetase family. Homodimer.

The protein localises to the cytoplasm. It catalyses the reaction tRNA(His) + L-histidine + ATP = L-histidyl-tRNA(His) + AMP + diphosphate + H(+). The sequence is that of Histidine--tRNA ligase from Marinomonas sp. (strain MWYL1).